The primary structure comprises 257 residues: Dihydroorotate dehydrogenase B (NAD(+)), electron transfer subunit (257 aa).

Residues 2–102 form the FAD-binding FR-type domain; sequence IGRERMTVAS…LGPLGNGFPL (101 aa). FAD-binding positions include 53 to 56, 70 to 72, and 77 to 78; these read RPLS, IYR, and GT. The [2Fe-2S] cluster site is built by cysteine 221, cysteine 226, cysteine 229, and cysteine 244.

Belongs to the PyrK family. Heterotetramer of 2 PyrK and 2 PyrD type B subunits. The cofactor is [2Fe-2S] cluster. FAD is required as a cofactor.

Its pathway is pyrimidine metabolism; UMP biosynthesis via de novo pathway; orotate from (S)-dihydroorotate (NAD(+) route): step 1/1. In terms of biological role, responsible for channeling the electrons from the oxidation of dihydroorotate from the FMN redox center in the PyrD type B subunit to the ultimate electron acceptor NAD(+). The sequence is that of Dihydroorotate dehydrogenase B (NAD(+)), electron transfer subunit from Geobacillus kaustophilus (strain HTA426).